The primary structure comprises 372 residues: MMMSDLSLDLVEEILSRVPATSLKRLRSTCKLWNALFKNPGFTKKQFLKAPKESLVLMLKEYSVCPMIANLSVSAPSIEFKGALNLKNYPPYSEEVDIHEACHCDGLLLCTTMDYRIVVWNPCLGETRWIRWPKNIYSRFALGYEKNKYGRIYKILRCWDRHNSPTGRVDEFEIYEFSSDSWRVLDLVALDCHIASHIGVSFKGNTYWLASDKKDKYGLLLCFDFTTERFTRLCLPPSQDVSKMALSVVGGKQLSLLSQSDSTSKIMEMWVTNIIEDVLMWSKSFTVDIPIRGDYCPYLTSYLVDEEKKVAVCYNENFEKSNKKVYIIGEDNGYYTEIPLVESSYQVWGYPIIFNYVPSLVQIEEGGCIIKE.

One can recognise an F-box domain in the interval 1–50 (MMMSDLSLDLVEEILSRVPATSLKRLRSTCKLWNALFKNPGFTKKQFLKA). 3 Kelch repeats span residues 155-204 (ILRC…SFKG), 245-293 (ALSV…PIRG), and 324-372 (KVYI…IIKE).

This Arabidopsis thaliana (Mouse-ear cress) protein is Putative F-box/kelch-repeat protein At3g22730.